Here is a 284-residue protein sequence, read N- to C-terminus: 4-diphosphocytidyl-2-C-methyl-D-erythritol kinase (284 aa).

The active site involves Lys14. Position 98 to 108 (98 to 108 (PMGGGLGGGSS)) interacts with ATP. Residue Asp140 is part of the active site.

The protein belongs to the GHMP kinase family. IspE subfamily.

The enzyme catalyses 4-CDP-2-C-methyl-D-erythritol + ATP = 4-CDP-2-C-methyl-D-erythritol 2-phosphate + ADP + H(+). The protein operates within isoprenoid biosynthesis; isopentenyl diphosphate biosynthesis via DXP pathway; isopentenyl diphosphate from 1-deoxy-D-xylulose 5-phosphate: step 3/6. Functionally, catalyzes the phosphorylation of the position 2 hydroxy group of 4-diphosphocytidyl-2C-methyl-D-erythritol. In Shewanella putrefaciens (strain CN-32 / ATCC BAA-453), this protein is 4-diphosphocytidyl-2-C-methyl-D-erythritol kinase.